Reading from the N-terminus, the 537-residue chain is MDCKVVSLNEKDQFIPKIKSSDPVITGLFQYDAAQQTSFEKRMSKENNGREAALANVIREYMSDLKLSSEQELNIQHLANGSKVVIGGQQAGLFGGPLYTFHKIFSIITLSKELTDTHKQQVVPVFWIAGEDHDFDEVNHTFVYNENHGSLHKVKYHTMEMPETTVSRYYPDKAELKQTLKTMFIHMKETVHTQGLLEICDRIIDQYDSWTDMFKALLHETFKAYGVLFIDAQFEPLRKMEAPMFKKILKKHQLLDDAFRATQQRTQNQGLNAMIQTDTNVHLFLHDENMRQLVSYDGKHFKLNKTDKTYIKEEIINIAENQPELFSNNVVTRPLMEEWLFNTVAFVGGPSEIKYWAELKDVFELFDVEMPIVMPRLRITYLNDRIEKLLSKYNIPLEKVLVDGVEGERSKFIREQASHQFIEKVEGMIEQQRRLNKDLLDEVAGNQNNINLVNKNNEIHIQQYDYLLKRYLLNIERENDISMKQFREIQETLHPMGGLQERIWNPLQILNDFGTDVFKPSTYPPLSYTFDHIIIKP.

Positions 422 to 450 (IEKVEGMIEQQRRLNKDLLDEVAGNQNNI) form a coiled coil.

It belongs to the BshC family.

In terms of biological role, involved in bacillithiol (BSH) biosynthesis. May catalyze the last step of the pathway, the addition of cysteine to glucosamine malate (GlcN-Mal) to generate BSH. The chain is Putative cysteine ligase BshC from Staphylococcus aureus (strain USA300).